The following is a 352-amino-acid chain: Photosystem II protein D1 (352 aa).

Thr-2 bears the N-acetylthreonine mark. Thr-2 carries the post-translational modification Phosphothreonine. 3 helical membrane passes run 29–46 (YIGW…TATS), 118–133 (HFLL…EWEL), and 142–156 (WIAV…AATA). Position 118 (His-118) interacts with chlorophyll a. Tyr-126 lines the pheophytin a pocket. [CaMn4O5] cluster contacts are provided by Asp-170 and Glu-189. Residues 197–218 (FHMLGVAGVFGGSLFSAMHGSL) traverse the membrane as a helical segment. Position 198 (His-198) interacts with chlorophyll a. A quinone contacts are provided by residues His-215 and 264–265 (SF). Position 215 (His-215) interacts with Fe cation. His-272 serves as a coordination point for Fe cation. Residues 274 to 288 (FLAAWPVVGIWFTAL) form a helical membrane-spanning segment. His-332, Glu-333, Asp-342, and Ala-344 together coordinate [CaMn4O5] cluster. The propeptide occupies 345–352 (SVEAPVVG).

This sequence belongs to the reaction center PufL/M/PsbA/D family. As to quaternary structure, PSII is composed of 1 copy each of membrane proteins PsbA, PsbB, PsbC, PsbD, PsbE, PsbF, PsbH, PsbI, PsbJ, PsbK, PsbL, PsbM, PsbT, PsbX, PsbY, PsbZ, Psb30/Ycf12, at least 3 peripheral proteins of the oxygen-evolving complex and a large number of cofactors. It forms dimeric complexes. Requires The D1/D2 heterodimer binds P680, chlorophylls that are the primary electron donor of PSII, and subsequent electron acceptors. It shares a non-heme iron and each subunit binds pheophytin, quinone, additional chlorophylls, carotenoids and lipids. D1 provides most of the ligands for the Mn4-Ca-O5 cluster of the oxygen-evolving complex (OEC). There is also a Cl(-1) ion associated with D1 and D2, which is required for oxygen evolution. The PSII complex binds additional chlorophylls, carotenoids and specific lipids. as cofactor. Tyr-161 forms a radical intermediate that is referred to as redox-active TyrZ, YZ or Y-Z. Post-translationally, C-terminally processed by CTPA; processing is essential to allow assembly of the oxygen-evolving complex and thus photosynthetic growth.

It localises to the plastid. It is found in the chloroplast thylakoid membrane. The catalysed reaction is 2 a plastoquinone + 4 hnu + 2 H2O = 2 a plastoquinol + O2. In terms of biological role, photosystem II (PSII) is a light-driven water:plastoquinone oxidoreductase that uses light energy to abstract electrons from H(2)O, generating O(2) and a proton gradient subsequently used for ATP formation. It consists of a core antenna complex that captures photons, and an electron transfer chain that converts photonic excitation into a charge separation. The D1/D2 (PsbA/PsbD) reaction center heterodimer binds P680, the primary electron donor of PSII as well as several subsequent electron acceptors. In Zygnema circumcarinatum (Green alga), this protein is Photosystem II protein D1.